The primary structure comprises 329 residues: 4-hydroxythreonine-4-phosphate dehydrogenase (329 aa).

The substrate site is built by histidine 136 and threonine 137. The a divalent metal cation site is built by histidine 166, histidine 211, and histidine 266. 3 residues coordinate substrate: lysine 274, asparagine 283, and arginine 292.

Belongs to the PdxA family. In terms of assembly, homodimer. The cofactor is Zn(2+). Requires Mg(2+) as cofactor. Co(2+) is required as a cofactor.

The protein resides in the cytoplasm. It carries out the reaction 4-(phosphooxy)-L-threonine + NAD(+) = 3-amino-2-oxopropyl phosphate + CO2 + NADH. The protein operates within cofactor biosynthesis; pyridoxine 5'-phosphate biosynthesis; pyridoxine 5'-phosphate from D-erythrose 4-phosphate: step 4/5. Functionally, catalyzes the NAD(P)-dependent oxidation of 4-(phosphooxy)-L-threonine (HTP) into 2-amino-3-oxo-4-(phosphooxy)butyric acid which spontaneously decarboxylates to form 3-amino-2-oxopropyl phosphate (AHAP). The chain is 4-hydroxythreonine-4-phosphate dehydrogenase from Salmonella typhi.